Reading from the N-terminus, the 160-residue chain is Cytochrome b6-f complex subunit 4 (160 aa).

A run of 3 helical transmembrane segments spans residues 36-56 (LLYV…GLAI), 95-115 (LLGI…PFIE), and 131-151 (AIFL…TFPI).

It belongs to the cytochrome b family. PetD subfamily. In terms of assembly, the 4 large subunits of the cytochrome b6-f complex are cytochrome b6, subunit IV (17 kDa polypeptide, PetD), cytochrome f and the Rieske protein, while the 4 small subunits are PetG, PetL, PetM and PetN. The complex functions as a dimer.

It localises to the cellular thylakoid membrane. Component of the cytochrome b6-f complex, which mediates electron transfer between photosystem II (PSII) and photosystem I (PSI), cyclic electron flow around PSI, and state transitions. This chain is Cytochrome b6-f complex subunit 4, found in Microcystis aeruginosa (strain NIES-843 / IAM M-2473).